The primary structure comprises 182 residues: MIRQRRRALTPEQQQEMGQQAATRMMTYPPVVMAHTVAVFLSFDGELDTQPLIEQLWRAGKRVYLPVLHPFSAGNLLFLNYHPQSELVMNRLKIHEPKLDVRDVLPLSRLDVLITPLVAFDEYGQRLGMGGGFYDRTLQNWQHYKTQPVGYAHDCQLVEKLPVEEWDIPLPAVVTPSKVWEW.

Residues 1 to 21 form a disordered region; that stretch reads MIRQRRRALTPEQQQEMGQQA. The segment covering 11-21 has biased composition (polar residues); that stretch reads PEQQQEMGQQA. ATP is bound by residues 128 to 135 and Asp-167; that span reads GMGGGFYD.

It belongs to the 5-formyltetrahydrofolate cyclo-ligase family.

The catalysed reaction is (6S)-5-formyl-5,6,7,8-tetrahydrofolate + ATP = (6R)-5,10-methenyltetrahydrofolate + ADP + phosphate. It participates in one-carbon metabolism; tetrahydrofolate interconversion. Its function is as follows. Involved in the removal of 5-formyltetrahydrofolate. In vitro, it is a potent inhibitor of various folate-dependent enzymes in the C1 metabolism network and in vivo it might function as a folate storage. 5-formyltetrahydrofolate is also used as an antifolate rescue agent in cancer chemotherapy. Catalyzes the irreversible ATP-dependent transformation of 5-formyltetrahydrofolate (5-CHO-THF) to form 5,10-methenyltetrahydrofolate (5,10-CH=THF). The reverse reaction is catalyzed by the serine hydroxymethyltransferase GlyA (SHMT). The protein is 5-formyltetrahydrofolate cyclo-ligase (ygfA) of Escherichia coli O157:H7.